The primary structure comprises 351 residues: MQVEVKLKENAYKVYIDELEELEFDSKVFILSNPKISGLHLKTLLSKIKAKEIFIATVKDGEEYKNLSTMEEILNQMFNSKLDRKSVLISFGGGVISDMGGFAASIYQRGIDFINIPTTLLACVDAAVGGKTGVNNNFGKNLIGTFYQPKAVYCESSFLKTLSFRELAAGMAEFIKMAAMFDDSILDFIEKIDEKSFLNATCENEIFTQIIARSIELKSRVVEQDEKESGLRMLLNYGHTFAHVIENFTDYKLYLHGEAVAIGMVMANQLALNLGLLDKMQSQKIKDILLKFGLPISYKINNVDEFYEAFFMDKKSSNKKINFVLASPLGKGFIKGDISKEDIIATLREFQ.

NAD(+) contacts are provided by residues 60–65, 94–98, 118–119, K131, K140, and 158–161; these read DGEEYK, GVISD, TT, and FLKT. The Zn(2+) site is built by E173, H239, and H256.

Belongs to the sugar phosphate cyclases superfamily. Dehydroquinate synthase family. Co(2+) is required as a cofactor. It depends on Zn(2+) as a cofactor. The cofactor is NAD(+).

It is found in the cytoplasm. It carries out the reaction 7-phospho-2-dehydro-3-deoxy-D-arabino-heptonate = 3-dehydroquinate + phosphate. It functions in the pathway metabolic intermediate biosynthesis; chorismate biosynthesis; chorismate from D-erythrose 4-phosphate and phosphoenolpyruvate: step 2/7. Catalyzes the conversion of 3-deoxy-D-arabino-heptulosonate 7-phosphate (DAHP) to dehydroquinate (DHQ). The polypeptide is 3-dehydroquinate synthase (Campylobacter jejuni subsp. jejuni serotype O:23/36 (strain 81-176)).